Consider the following 664-residue polypeptide: Fructose-1,6-bisphosphatase class 3 (664 aa).

The protein belongs to the FBPase class 3 family. The cofactor is Mn(2+).

The catalysed reaction is beta-D-fructose 1,6-bisphosphate + H2O = beta-D-fructose 6-phosphate + phosphate. Its pathway is carbohydrate biosynthesis; gluconeogenesis. The protein is Fructose-1,6-bisphosphatase class 3 of Bacteroides fragilis (strain YCH46).